We begin with the raw amino-acid sequence, 372 residues long: 7-methylxanthosine synthase 1 (372 aa).

Y18 lines the S-adenosyl-L-homocysteine pocket. Xanthosine-binding residues include N21 and N25. Residues C62, N67, D101, L102, S140, F141, and C157 each contribute to the S-adenosyl-L-homocysteine site. Y158 provides a ligand contact to xanthosine. C159 provides a ligand contact to S-adenosyl-L-homocysteine. Positions 161 and 162 each coordinate xanthosine. Positions 179, 261, 263, and 264 each coordinate Mg(2+). Xanthosine contacts are provided by S316, Y321, and Y356.

The protein belongs to the methyltransferase superfamily. Type-7 methyltransferase family. It depends on Mg(2+) as a cofactor. As to expression, expressed in stems, young leaves, floral buds, developing endosperm and immature fruits (grains). Detected in roots and old leaves, but not in mature fruits.

The catalysed reaction is xanthosine + S-adenosyl-L-methionine = 7-methylxanthosine + S-adenosyl-L-homocysteine. It functions in the pathway alkaloid biosynthesis. Functionally, involved in the biosynthesis of caffeine. Specific for xanthosine and could not use xanthosine 5'-monophosphate (XMP) as substrate. Catalyzes the 7-N-methylation activity of xanthosine, but does not have 1-N- or 3-N-methylation activity. The chain is 7-methylxanthosine synthase 1 from Coffea arabica (Arabian coffee).